The chain runs to 558 residues: Acid-sensing ion channel 4-B (558 aa).

Over M1–T71 the chain is Cytoplasmic. Residues L72–A92 form a helical membrane-spanning segment. Residues A93–D433 lie on the Extracellular side of the membrane. Cystine bridges form between C120–C204 and C182–C189. N-linked (GlcNAc...) asparagine glycans are attached at residues N140, N183, N188, N210, and N245. 5 cysteine pairs are disulfide-bonded: C298/C373, C317/C369, C321/C367, C330/C351, and C332/C344. The N-linked (GlcNAc...) asparagine glycan is linked to N374. A helical transmembrane segment spans residues I434 to L454. Residues G450–S452 carry the GAS motif; ion selectivity filter motif. The Cytoplasmic segment spans residues T455–C558.

This sequence belongs to the amiloride-sensitive sodium channel (TC 1.A.6) family. ASIC4 subfamily. As to quaternary structure, homotrimer. Heterotrimer; with other ASIC proteins producing functional channels. As to expression, expressed in central nervous system.

It is found in the cell membrane. The enzyme catalyses Na(+)(in) = Na(+)(out). In terms of biological role, does not exhibit measurable stand-alone pH-gated sodium channel activity but may form pH-gated heterotrimeric sodium channels. This chain is Acid-sensing ion channel 4-B, found in Danio rerio (Zebrafish).